The chain runs to 504 residues: Maturase K (504 aa).

The protein belongs to the intron maturase 2 family. MatK subfamily.

Its subcellular location is the plastid. The protein resides in the chloroplast. In terms of biological role, usually encoded in the trnK tRNA gene intron. Probably assists in splicing its own and other chloroplast group II introns. In Actinidia chinensis (Kiwi), this protein is Maturase K.